The chain runs to 214 residues: Ribosomal protein uL16-like (214 aa).

This sequence belongs to the universal ribosomal protein uL16 family. As to quaternary structure, component of a male germ cell-specific 60S large ribosomal subunit (LSU), which contains RPL10L and RPL39L, instead of RPL10 and RPL39 paralogs. The composition of the rest of the complex is similar to classical ribosomes. As to expression, almost testis-specific. Also expressed in pre- and postmenopausal ovary.

The protein localises to the cytoplasm. In terms of biological role, testis-specific component of the ribosome, which is required for the transition from prophase to metaphase in male meiosis I. Compensates for the inactivated X-linked RPL10 paralog during spermatogenesis. The ribosome is a large ribonucleoprotein complex responsible for the synthesis of proteins in the cell. The male germ cell-specific ribosome displays a ribosomal polypeptide exit tunnel of distinct size and charge states compared with the classical ribosome. It is responsible for regulating the biosynthesis and folding of a subset of male germ-cell-specific proteins that are essential for the formation of sperm. This Homo sapiens (Human) protein is Ribosomal protein uL16-like.